The following is a 279-amino-acid chain: Indole-3-glycerol phosphate synthase (279 aa).

Belongs to the TrpC family.

It carries out the reaction 1-(2-carboxyphenylamino)-1-deoxy-D-ribulose 5-phosphate + H(+) = (1S,2R)-1-C-(indol-3-yl)glycerol 3-phosphate + CO2 + H2O. It functions in the pathway amino-acid biosynthesis; L-tryptophan biosynthesis; L-tryptophan from chorismate: step 4/5. In Ectopseudomonas mendocina (strain ymp) (Pseudomonas mendocina), this protein is Indole-3-glycerol phosphate synthase.